A 396-amino-acid polypeptide reads, in one-letter code: Elongation factor Tu (396 aa).

In terms of domain architecture, tr-type G spans 10–205; sequence KPHVNIGTIG…ACDDNIPDPV (196 aa). The segment at 19–26 is G1; the sequence is GHVDHGKT. 19-26 is a binding site for GTP; sequence GHVDHGKT. Thr-26 is a Mg(2+) binding site. Positions 62-66 are G2; that stretch reads GITIN. The interval 83-86 is G3; that stretch reads DAPG. Residues 83–87 and 138–141 contribute to the GTP site; these read DAPGH and NKCD. Residues 138-141 form a G4 region; that stretch reads NKCD. The G5 stretch occupies residues 175–177; sequence SAL.

This sequence belongs to the TRAFAC class translation factor GTPase superfamily. Classic translation factor GTPase family. EF-Tu/EF-1A subfamily. In terms of assembly, monomer.

The protein localises to the cytoplasm. The catalysed reaction is GTP + H2O = GDP + phosphate + H(+). Its function is as follows. GTP hydrolase that promotes the GTP-dependent binding of aminoacyl-tRNA to the A-site of ribosomes during protein biosynthesis. The protein is Elongation factor Tu of Corynebacterium efficiens (strain DSM 44549 / YS-314 / AJ 12310 / JCM 11189 / NBRC 100395).